The primary structure comprises 368 residues: Seven-bladed beta-propeller protein MSMEG_5308 (368 aa).

In terms of assembly, interacts with MmpL3 and TtfA.

Its subcellular location is the cell septum. The protein localises to the cell tip. Functionally, stabilizes the MmpL3/TtfA trehalose monomycolate (TMM) transport complex under stress conditions. The chain is Seven-bladed beta-propeller protein MSMEG_5308 from Mycolicibacterium smegmatis (strain ATCC 700084 / mc(2)155) (Mycobacterium smegmatis).